Consider the following 476-residue polypeptide: Eukaryotic translation initiation factor 3 subunit L (476 aa).

One can recognise a PCI domain in the interval 257–452 (DAIRMFSHIL…DLDYALENDL (196 aa)).

This sequence belongs to the eIF-3 subunit L family. As to quaternary structure, component of the eukaryotic translation initiation factor 3 (eIF-3) complex.

Its subcellular location is the cytoplasm. In terms of biological role, component of the eukaryotic translation initiation factor 3 (eIF-3) complex, which is involved in protein synthesis of a specialized repertoire of mRNAs and, together with other initiation factors, stimulates binding of mRNA and methionyl-tRNAi to the 40S ribosome. The eIF-3 complex specifically targets and initiates translation of a subset of mRNAs involved in cell proliferation. The sequence is that of Eukaryotic translation initiation factor 3 subunit L from Aspergillus fumigatus (strain CBS 144.89 / FGSC A1163 / CEA10) (Neosartorya fumigata).